Reading from the N-terminus, the 84-residue chain is Dolichol phosphate-mannose biosynthesis regulatory protein (84 aa).

2 consecutive transmembrane segments (helical) span residues 11–31 and 49–69; these read LGLV…VILL and YAVA…GLFI.

The protein belongs to the DPM2 family. Component of the dolichol-phosphate mannose (DPM) synthase complex composed of DPM1, DPM2 and DPM3; in the complex interacts directly with DPM3. Component of the glycosylphosphatidylinositol-N-acetylglucosaminyltransferase (GPI-GnT) complex composed at least by PIGA, PIGC, PIGH, PIGP, PIGQ, PIGY and DPM2. Interacts with PIGA, PIGC and PIGQ.

The protein resides in the endoplasmic reticulum membrane. It participates in protein modification; protein glycosylation. Its function is as follows. Regulates the biosynthesis of dolichol phosphate-mannose. Regulatory subunit of the dolichol-phosphate mannose (DPM) synthase complex; essential for the ER localization and stable expression of DPM1. Part of the glycosylphosphatidylinositol-N-acetylglucosaminyltransferase (GPI-GnT) complex that catalyzes the transfer of N-acetylglucosamine from UDP-N-acetylglucosamine to phosphatidylinositol and participates in the first step of GPI biosynthesis. May act by regulating the GPI-GNT complex. The chain is Dolichol phosphate-mannose biosynthesis regulatory protein from Homo sapiens (Human).